The following is a 149-amino-acid chain: Myosin light chain 1 (149 aa).

3 EF-hand domains span residues 2–37 (SATR…IGYN), 81–116 (AKTE…LGEK), and 117–149 (LTDA…VLRQ). Ca(2+) contacts are provided by Asp15, Asp94, Thr98, Lys100, and Asp105. Lys116 participates in a covalent cross-link: Glycyl lysine isopeptide (Lys-Gly) (interchain with G-Cter in ubiquitin). Ca(2+) is bound by residues Asp123, Lys127, and Asp132.

Interacts with MYO1, MYO2 and IQG1 by binding to their IQ domains. Interacts with SEC4.

Its subcellular location is the bud neck. The protein localises to the bud tip. Functionally, essential light chain for the class II conventional myosin MYO1. Also acts as light chain for the class V unconventional myosin MYO2 and for IQG1. Involved in the assembly of the contractile actomyosin ring at the bud neck during cytokinesis by recruiting IQG1 to the bud neck. Also required for chitin and MYO2-dependent secretory vesicle deposition to the center of the bud neck for septum formation. May stabilize MYO2 by binding to its IQ domains. Its major function is probably not to regulate MYO1 activity, but rather to coordinate actin ring formation and targeted membrane deposition during cytokinesis via its interactions with MYO1, IQG1 and MYO2. This is Myosin light chain 1 (MLC1) from Saccharomyces cerevisiae (strain ATCC 204508 / S288c) (Baker's yeast).